We begin with the raw amino-acid sequence, 299 residues long: Bifunctional protein FolD (299 aa).

NADP(+)-binding positions include 168–170, serine 193, and isoleucine 234; that span reads GRS.

This sequence belongs to the tetrahydrofolate dehydrogenase/cyclohydrolase family. Homodimer.

It catalyses the reaction (6R)-5,10-methylene-5,6,7,8-tetrahydrofolate + NADP(+) = (6R)-5,10-methenyltetrahydrofolate + NADPH. The enzyme catalyses (6R)-5,10-methenyltetrahydrofolate + H2O = (6R)-10-formyltetrahydrofolate + H(+). It participates in one-carbon metabolism; tetrahydrofolate interconversion. Functionally, catalyzes the oxidation of 5,10-methylenetetrahydrofolate to 5,10-methenyltetrahydrofolate and then the hydrolysis of 5,10-methenyltetrahydrofolate to 10-formyltetrahydrofolate. In Rhizobium johnstonii (strain DSM 114642 / LMG 32736 / 3841) (Rhizobium leguminosarum bv. viciae), this protein is Bifunctional protein FolD.